A 370-amino-acid polypeptide reads, in one-letter code: Putative methylthioribose-1-phosphate isomerase (370 aa).

Residues 66-68 (RGA), Arg-109, and Gln-217 each bind substrate. The Proton donor role is filled by Asp-258. Residue 268–269 (NK) coordinates substrate.

The protein belongs to the eIF-2B alpha/beta/delta subunits family. MtnA subfamily.

It catalyses the reaction 5-(methylsulfanyl)-alpha-D-ribose 1-phosphate = 5-(methylsulfanyl)-D-ribulose 1-phosphate. Its function is as follows. Catalyzes the interconversion of methylthioribose-1-phosphate (MTR-1-P) into methylthioribulose-1-phosphate (MTRu-1-P). This chain is Putative methylthioribose-1-phosphate isomerase, found in Aeropyrum pernix (strain ATCC 700893 / DSM 11879 / JCM 9820 / NBRC 100138 / K1).